The sequence spans 310 residues: Alpha/beta hydrolase domain-containing protein 17A (310 aa).

A disordered region spans residues 38–61 (VPEPEPGPGGAGAAPSGPLRTSAA). Catalysis depends on charge relay system residues serine 190, aspartate 255, and histidine 284. A Phosphoserine modification is found at serine 307.

Belongs to the AB hydrolase superfamily. ABHD17 family. Post-translationally, palmitoylated on cysteine residues located in a cysteine cluster at the N-terminus which promotes membrane localization. Palmitoylation is required for post-synaptic localization and for depalmitoylating activity towards DLG4/PSD95.

Its subcellular location is the cell membrane. It localises to the endosome membrane. The protein resides in the cell projection. The protein localises to the dendritic spine. It is found in the postsynaptic density membrane. It carries out the reaction S-hexadecanoyl-L-cysteinyl-[protein] + H2O = L-cysteinyl-[protein] + hexadecanoate + H(+). In terms of biological role, hydrolyzes fatty acids from S-acylated cysteine residues in proteins. Has depalmitoylating activity towards NRAS. Has depalmitoylating activity towards DLG4/PSD95. May have depalmitoylating activity towars MAP6. The sequence is that of Alpha/beta hydrolase domain-containing protein 17A from Mus musculus (Mouse).